The following is a 316-amino-acid chain: Probable cell division protein WhiA (316 aa).

Positions 275-309 (TLKELGEMVESGKISKSGINHRLRKLDQIAEQLRN) form a DNA-binding region, H-T-H motif.

This sequence belongs to the WhiA family.

Involved in cell division and chromosome segregation. The protein is Probable cell division protein WhiA of Bacillus pumilus (strain SAFR-032).